Here is a 637-residue protein sequence, read N- to C-terminus: Threonine--tRNA ligase (637 aa).

The TGS domain maps to 1–61; sequence MPNVKLPDGN…KEDCSLIIVT (61 aa). The segment at 242 to 533 is catalytic; it reads DHRKLGKALD…LIEHYAGKLP (292 aa). C333, H384, and H510 together coordinate Zn(2+).

The protein belongs to the class-II aminoacyl-tRNA synthetase family. In terms of assembly, homodimer. Zn(2+) is required as a cofactor.

The protein resides in the cytoplasm. The enzyme catalyses tRNA(Thr) + L-threonine + ATP = L-threonyl-tRNA(Thr) + AMP + diphosphate + H(+). Functionally, catalyzes the attachment of threonine to tRNA(Thr) in a two-step reaction: L-threonine is first activated by ATP to form Thr-AMP and then transferred to the acceptor end of tRNA(Thr). Also edits incorrectly charged L-seryl-tRNA(Thr). The sequence is that of Threonine--tRNA ligase from Legionella pneumophila (strain Corby).